Reading from the N-terminus, the 312-residue chain is Protein phosphatase 2A catalytic subunit B (312 aa).

4 residues coordinate Mn(2+): D55, H57, D83, and N115. H116 (proton donor) is an active-site residue. Mn(2+) contacts are provided by H165 and H240.

The protein belongs to the PPP phosphatase family. PP-2A subfamily. In terms of assembly, component of the Sca1 complex composed of at least gefA, gefH, scaA, phr, and the protein phosphatase 2A subunits pppA and pho2B. It depends on Mn(2+) as a cofactor.

The protein localises to the cell membrane. The enzyme catalyses O-phospho-L-seryl-[protein] + H2O = L-seryl-[protein] + phosphate. The catalysed reaction is O-phospho-L-threonyl-[protein] + H2O = L-threonyl-[protein] + phosphate. Component of the Sca1 complex, a regulator of cell motility, chemotaxis and signal relay. The Sca1 complex is recruited to the plasma membrane in a chemoattractant- and F-actin-dependent manner and is enriched at the leading edge of chemotaxing cells where it regulates F-actin dynamics and signal relay by controlling the activation of rasC and the downstream target of rapamycin complex 2 (TORC2)-Akt/protein kinase B (PKB) pathway. The sequence is that of Protein phosphatase 2A catalytic subunit B from Dictyostelium discoideum (Social amoeba).